The primary structure comprises 344 residues: Heat-inducible transcription repressor HrcA (344 aa).

It belongs to the HrcA family.

Negative regulator of class I heat shock genes (grpE-dnaK-dnaJ and groELS operons). Prevents heat-shock induction of these operons. The protein is Heat-inducible transcription repressor HrcA of Desulforudis audaxviator (strain MP104C).